The primary structure comprises 328 residues: Probable membrane-associated kinase regulator 4 (328 aa).

Positions 213–253 are disordered; it reads GQIKTERPKKQSNGSVSGSHRRSFSVSMRRQAAKSSNNKSS. The span at 223–240 shows a compositional bias: polar residues; the sequence is QSNGSVSGSHRRSFSVSM.

Its subcellular location is the cell membrane. In Arabidopsis thaliana (Mouse-ear cress), this protein is Probable membrane-associated kinase regulator 4 (MAKR4).